Reading from the N-terminus, the 1262-residue chain is Unconventional myosin-VI (1262 aa).

The 52-residue stretch at 2 to 53 (EDGKPVWAPHPTDGFQMGNIVDIGPDSLTIEPLNQKGKTFLALINQVFPAEE) folds into the Myosin N-terminal SH3-like domain. The Myosin motor domain maps to 57–771 (KDVEDNCSLM…KFAEFDQIMK (715 aa)). 151–158 (GESGAGKT) is a binding site for ATP. Phosphoserine is present on Ser-267. The interval 273 to 317 (YLNRGCTRFFANKETDKQILQNRKSPEYVKAGSLKDPLLDDHGDF) is responsible for slow ATPase activity. Thr-405 is subject to Phosphothreonine. Position 604 is a phosphoserine (Ser-604). 2 actin-binding regions span residues 651 to 673 (LNLLLDKLRSTGASFIRCIKPNL) and 665 to 672 (FIRCIKPN). The tract at residues 782 to 810 (KRVNLWLVCSRWKKVQWCSLSVIKLKNKI) is required for binding calmodulin. The IQ domain maps to 814–834 (AEACIKMQKTIRMWLCKRRHK). Residues 835-916 (PRIDGLVKVG…EDLLSALQKK (82 aa)) are three-helix bundle. Positions 864–984 (KPEVNRQIKN…EDDEKRIQAE (121 aa)) form a coiled coil. The segment at 917-984 (KQQEEEAERL…EDDEKRIQAE (68 aa)) is SAH. The disordered stretch occupies residues 933–955 (MEKERKRREEDEERRRKEEEERR). Ser-1025 bears the Phosphoserine mark. Residues 1034-1253 (LRRGPAVQAT…ESRQARPTYA (220 aa)) are interaction with TAX1BP1 and CALCOCO2/NDP52. The tract at residues 1084–1086 (RRL) is interaction with OPTN. Ser-1123 carries the post-translational modification Phosphoserine. The interval 1125-1253 (QQNPAAQLPA…ESRQARPTYA (129 aa)) is interaction with TOM1.

The protein belongs to the TRAFAC class myosin-kinesin ATPase superfamily. Myosin family. In terms of assembly, homodimer; dimerization seems to implicate the unfolding of the three-helix bundle region creating an additional calmodulin binding site, and cargo binding. Able to function as a monomer under specific conditions in vitro. Forms a complex with CFTR and DAB2 in the apical membrane of epithelial cells. Component of the DISP/DOCK7-induced septin displacement complex, at least composed of DOCK7, LRCH3 and MYO6. Binding to calmodulin through a unique insert, not found in other myosins, located in the neck region between the motor domain and the IQ domain appears to contribute to the directionality reversal. This interaction occurs only if the C-terminal lobe of calmodulin is occupied by calcium. Interaction with F-actin/ACTN1 occurs only at the apical brush border domain of the proximal tubule cells. Interacts with DAB2. In vitro, the C-terminal globular tail binds a C-terminal region of DAB2. Interacts with CFTR. Interacts with CABP5. Interacts (via residues 1128-1256) with TOM1 (via residues 392-463). Interacts (via residues 1060-1285) with OPTN. Interacts (via residues 1060-1285) with TAX1BP1 and CALCOCO2/NDP52. Interacts with TOM1L2. Interacts with CLIC5; may work together in a complex which also includes RDX and MYO6 to stabilize linkages between the plasma membrane and subjacent actin cytoskeleton at the base of stereocilia. Post-translationally, phosphorylation in the motor domain, induced by EGF, results in translocation of MYO6 from the cell surface to membrane ruffles and affects F-actin dynamics. Phosphorylated in vitro by p21-activated kinase (PAK). Within the cochlea, expressed specifically within the sensory hair cells (at protein level). Expressed in the inner and outer plexiform layer of the retina (at protein level). Widely expressed. Expressed in the brain, kidney, liver, and testis.

The protein resides in the golgi apparatus. It is found in the trans-Golgi network membrane. Its subcellular location is the nucleus. The protein localises to the cytoplasm. It localises to the perinuclear region. The protein resides in the membrane. It is found in the clathrin-coated pit. Its subcellular location is the cytoplasmic vesicle. The protein localises to the clathrin-coated vesicle. It localises to the cell projection. The protein resides in the filopodium. It is found in the ruffle membrane. Its subcellular location is the microvillus. The protein localises to the cytosol. Myosins are actin-based motor molecules with ATPase activity. Unconventional myosins serve in intracellular movements. Myosin 6 is a reverse-direction motor protein that moves towards the minus-end of actin filaments. Has slow rate of actin-activated ADP release due to weak ATP binding. Functions in a variety of intracellular processes such as vesicular membrane trafficking and cell migration. Required for the structural integrity of the Golgi apparatus via the p53-dependent pro-survival pathway. Appears to be involved in a very early step of clathrin-mediated endocytosis in polarized epithelial cells. Together with TOM1, mediates delivery of endocytic cargo to autophagosomes thereby promoting autophagosome maturation and driving fusion with lysosomes. Links TOM1 with autophagy receptors, such as TAX1BP1; CALCOCO2/NDP52 and OPTN. May act as a regulator of F-actin dynamics. As part of the DISP complex, may regulate the association of septins with actin and thereby regulate the actin cytoskeleton. May play a role in transporting DAB2 from the plasma membrane to specific cellular targets. May play a role in the extension and network organization of neurites. Required for structural integrity of inner ear hair cells. Required for the correct localization of CLIC5 and RDX at the stereocilium base. Modulates RNA polymerase II-dependent transcription. The sequence is that of Unconventional myosin-VI (Myo6) from Mus musculus (Mouse).